A 198-amino-acid polypeptide reads, in one-letter code: Putative glutathione S-transferase alpha-2 (198 aa).

The residue at position 2 (Ser2) is an N-acetylserine. In terms of domain architecture, GST N-terminal spans 5-81; it reads SVPSLTYFQG…YIAKKHNFMG (77 aa). Residues Tyr11, Arg45, 52 to 53, and 65 to 66 contribute to the glutathione site; these read QL and QS. Positions 83–198 constitute a GST C-terminal domain; the sequence is NLEEEFLVDQ…YIKERPETKF (116 aa).

It belongs to the GST superfamily. Alpha family.

The catalysed reaction is RX + glutathione = an S-substituted glutathione + a halide anion + H(+). Its function is as follows. Conjugation of reduced glutathione to a wide number of exogenous and endogenous hydrophobic electrophiles. This chain is Putative glutathione S-transferase alpha-2 (gsta2-1), found in Dictyostelium discoideum (Social amoeba).